The following is a 217-amino-acid chain: Somatotropin (217 aa).

Positions Met-1 to Ala-26 are cleaved as a signal peptide. His-44 contacts Zn(2+). Cys-79 and Cys-191 are joined by a disulfide. Residue Ser-132 is modified to Phosphoserine. Residue Glu-200 coordinates Zn(2+). An intrachain disulfide couples Cys-208 to Cys-215.

Belongs to the somatotropin/prolactin family.

The protein resides in the secreted. Plays an important role in growth control. Its major role in stimulating body growth is to stimulate the liver and other tissues to secrete IGF1. It stimulates both the differentiation and proliferation of myoblasts. It also stimulates amino acid uptake and protein synthesis in muscle and other tissues. In Pan troglodytes (Chimpanzee), this protein is Somatotropin (GH1).